A 578-amino-acid chain; its full sequence is Tetratricopeptide repeat protein 39A (578 aa).

TPR repeat units follow at residues Ala-280–Trp-313, Cys-470–Ile-503, and Pro-511–Tyr-544.

It belongs to the TTC39 family.

This Mus musculus (Mouse) protein is Tetratricopeptide repeat protein 39A (Ttc39a).